The following is an 84-amino-acid chain: uncharacterized protein (84 aa).

The chain crosses the membrane as a helical span at residues 7 to 23 (AFSGVIALYGGYLYLRL).

The protein resides in the membrane. This is an uncharacterized protein from Haemophilus influenzae (strain ATCC 51907 / DSM 11121 / KW20 / Rd).